We begin with the raw amino-acid sequence, 281 residues long: 2,3,4,5-tetrahydropyridine-2,6-dicarboxylate N-succinyltransferase (281 aa).

It belongs to the transferase hexapeptide repeat family.

The protein resides in the cytoplasm. It catalyses the reaction (S)-2,3,4,5-tetrahydrodipicolinate + succinyl-CoA + H2O = (S)-2-succinylamino-6-oxoheptanedioate + CoA. It functions in the pathway amino-acid biosynthesis; L-lysine biosynthesis via DAP pathway; LL-2,6-diaminopimelate from (S)-tetrahydrodipicolinate (succinylase route): step 1/3. This is 2,3,4,5-tetrahydropyridine-2,6-dicarboxylate N-succinyltransferase from Afipia carboxidovorans (strain ATCC 49405 / DSM 1227 / KCTC 32145 / OM5) (Oligotropha carboxidovorans).